The sequence spans 154 residues: C-type lectin 16 (154 aa).

Positions Met1–Ser20 are cleaved as a signal peptide. Residues Asp27–Glu152 enclose the C-type lectin domain. 2 disulfides stabilise this stretch: Cys46-Cys151 and Cys123-Cys143.

As to quaternary structure, (Microbial infection) Interacts with non-structural protein 1 of dengue virus type 2. Interacts with envelope protein E of dengue virus type 2. In terms of tissue distribution, female salivary gland (at protein level). Not detected in female carcass without salivary glands (at protein level). Not detected in male tissues (at protein level).

The protein resides in the secreted. Putative lectin. May have a regulatory role in mosquito immunity. Probably suppresses replication of dengue virus type 2 in mosquito salivary glands. This chain is C-type lectin 16, found in Aedes aegypti (Yellowfever mosquito).